The sequence spans 350 residues: MIQIKNLKKEYRTNNTSNLVLDNINLEIKQGEIFGIIGHSGAGKSSLLRCLNLLEQPTDGSIFIADENITKKNSKQLREFRKKVAMIFQHFNLLSSRNVFENIALPLEIQGIPKSEIKKRVFELLDLVELPNKANAYPQELSGGQKQKVAIARALALNPLVLLSDEATSALDPTSTKQILALLKILNKELGLTIVLITHEIDVVRKICDRVAIIDKGRIAEMGKTLDVFLNPQAPVTRSFVETSIHTKVPDFIAKKLQDNPYSYDNTYPVVQLTFYGDKGKMPIIAEISRQFNATASIIQANIETIQDQIVGIAICHITGERQGWENALRFLSNQDVNLKVLGYATADNI.

The region spanning 2–241 (IQIKNLKKEY…PQAPVTRSFV (240 aa)) is the ABC transporter domain. 38-45 (GHSGAGKS) is an ATP binding site.

This sequence belongs to the ABC transporter superfamily. Methionine importer (TC 3.A.1.24) family. The complex is composed of two ATP-binding proteins (MetN), two transmembrane proteins (MetI) and a solute-binding protein (MetQ).

The protein localises to the cell inner membrane. The catalysed reaction is L-methionine(out) + ATP + H2O = L-methionine(in) + ADP + phosphate + H(+). It carries out the reaction D-methionine(out) + ATP + H2O = D-methionine(in) + ADP + phosphate + H(+). In terms of biological role, part of the ABC transporter complex MetNIQ involved in methionine import. Responsible for energy coupling to the transport system. The sequence is that of Methionine import ATP-binding protein MetN from Francisella tularensis subsp. tularensis (strain FSC 198).